The sequence spans 446 residues: tRNA-2-methylthio-N(6)-dimethylallyladenosine synthase (446 aa).

The MTTase N-terminal domain maps to 3-120 (QKLFIKTYGC…LPEMVNSVAH (118 aa)). The [4Fe-4S] cluster site is built by Cys-12, Cys-49, Cys-83, Cys-157, Cys-161, and Cys-164. A Radical SAM core domain is found at 143-375 (SSEGASAFVS…QQRILQFAQD (233 aa)). Residues 378-442 (RKMVGSTQRI…PNSLRGERVD (65 aa)) form the TRAM domain.

It belongs to the methylthiotransferase family. MiaB subfamily. Monomer. [4Fe-4S] cluster is required as a cofactor.

Its subcellular location is the cytoplasm. It carries out the reaction N(6)-dimethylallyladenosine(37) in tRNA + (sulfur carrier)-SH + AH2 + 2 S-adenosyl-L-methionine = 2-methylsulfanyl-N(6)-dimethylallyladenosine(37) in tRNA + (sulfur carrier)-H + 5'-deoxyadenosine + L-methionine + A + S-adenosyl-L-homocysteine + 2 H(+). Its function is as follows. Catalyzes the methylthiolation of N6-(dimethylallyl)adenosine (i(6)A), leading to the formation of 2-methylthio-N6-(dimethylallyl)adenosine (ms(2)i(6)A) at position 37 in tRNAs that read codons beginning with uridine. The protein is tRNA-2-methylthio-N(6)-dimethylallyladenosine synthase of Hahella chejuensis (strain KCTC 2396).